The following is a 373-amino-acid chain: 8-amino-7-oxononanoate synthase (373 aa).

Arg16 provides a ligand contact to substrate. 93–94 serves as a coordination point for pyridoxal 5'-phosphate; the sequence is GF. His118 provides a ligand contact to substrate. Pyridoxal 5'-phosphate contacts are provided by residues Ser165, 190–193, and 222–225; these read DEAH and TFSK. Lys225 carries the post-translational modification N6-(pyridoxal phosphate)lysine. Thr334 serves as a coordination point for substrate.

It belongs to the class-II pyridoxal-phosphate-dependent aminotransferase family. BioF subfamily. In terms of assembly, homodimer. Pyridoxal 5'-phosphate serves as cofactor.

The enzyme catalyses 6-carboxyhexanoyl-[ACP] + L-alanine + H(+) = (8S)-8-amino-7-oxononanoate + holo-[ACP] + CO2. It participates in cofactor biosynthesis; biotin biosynthesis. Its function is as follows. Catalyzes the decarboxylative condensation of pimeloyl-[acyl-carrier protein] and L-alanine to produce 8-amino-7-oxononanoate (AON), [acyl-carrier protein], and carbon dioxide. This is 8-amino-7-oxononanoate synthase from Helicobacter pylori (strain J99 / ATCC 700824) (Campylobacter pylori J99).